A 533-amino-acid polypeptide reads, in one-letter code: Frizzled/smoothened-like sans CRD protein H (533 aa).

An N-terminal signal peptide occupies residues 1-21 (MFIKFYFFIIFLILNFKNNYA). The Extracellular segment spans residues 22-103 (SPTLLDSVLS…GDWTTMMDMS (82 aa)). Asparagine 76 is a glycosylation site (N-linked (GlcNAc...) asparagine). Residues 104 to 124 (LIVATISFFASIFLILTYSPL) form a helical membrane-spanning segment. At 125–134 (MNPSYNNRHT) the chain is on the cytoplasmic side. Residues 135–155 (IGILSMSFGIFLIMFTDMYNL) traverse the membrane as a helical segment. The Extracellular portion of the chain corresponds to 156 to 177 (KKRFTLGCPSETRYAIQNDADC). Residues 178–198 (LITGLIFQFGCVSAVFFWTAL) traverse the membrane as a helical segment. Residues 199 to 216 (SLDLYFQITNRNISRKYD) are Cytoplasmic-facing. Residues 217 to 237 (LYYFIGVNLISLIFTFVPVIS) traverse the membrane as a helical segment. The Extracellular segment spans residues 238 to 259 (KSYGYGDFALGCWILDFNYALG). Residues 260–280 (CFWIPLSVCLIFSTVVVLMIL) traverse the membrane as a helical segment. At 281–302 (YEVYKIYKASNQKTSLKGHIKP) the chain is on the cytoplasmic side. Residues 303–323 (LLCLISNCFEFFYVFGYSLYL) form a helical membrane-spanning segment. Topologically, residues 324-360 (ATKLTELHDNMDAYIKCLFLNSQNDPDSYTCPDHRLK) are extracellular. A helical transmembrane segment spans residues 361 to 381 (LGPQFLFFLSLRLLGVSGIVF). The Cytoplasmic segment spans residues 382-533 (YGTNSKVRKI…LTNINTIDNV (152 aa)). Positions 454 to 533 (IIVTPGGDDD…LTNINTIDNV (80 aa)) are disordered. A compositionally biased stretch (low complexity) spans 466-518 (NNNNNNNNNNNNNNNNNNNNNNNNNNNNNNNNNNNNNNNNNNNNNSNENNENN). The stretch at 501 to 528 (NNNNNNNNNNSNENNENNTQEIELTNIN) forms a coiled coil. Residues 519-533 (TQEIELTNINTIDNV) show a composition bias toward polar residues.

This sequence belongs to the G-protein coupled receptor Fz/Smo family.

Its subcellular location is the membrane. In Dictyostelium discoideum (Social amoeba), this protein is Frizzled/smoothened-like sans CRD protein H (fscH).